We begin with the raw amino-acid sequence, 156 residues long: ATP synthase subunit b (156 aa).

Residues 12-32 (VAFLIFVLFCMKYVWPPVITA) traverse the membrane as a helical segment.

This sequence belongs to the ATPase B chain family. As to quaternary structure, F-type ATPases have 2 components, F(1) - the catalytic core - and F(0) - the membrane proton channel. F(1) has five subunits: alpha(3), beta(3), gamma(1), delta(1), epsilon(1). F(0) has three main subunits: a(1), b(2) and c(10-14). The alpha and beta chains form an alternating ring which encloses part of the gamma chain. F(1) is attached to F(0) by a central stalk formed by the gamma and epsilon chains, while a peripheral stalk is formed by the delta and b chains.

It is found in the cell inner membrane. In terms of biological role, f(1)F(0) ATP synthase produces ATP from ADP in the presence of a proton or sodium gradient. F-type ATPases consist of two structural domains, F(1) containing the extramembraneous catalytic core and F(0) containing the membrane proton channel, linked together by a central stalk and a peripheral stalk. During catalysis, ATP synthesis in the catalytic domain of F(1) is coupled via a rotary mechanism of the central stalk subunits to proton translocation. Component of the F(0) channel, it forms part of the peripheral stalk, linking F(1) to F(0). In Pseudomonas putida (strain GB-1), this protein is ATP synthase subunit b.